A 238-amino-acid chain; its full sequence is TATA-box-binding protein (238 aa).

The disordered stretch occupies residues 1–58 (MDLKLPPTNPTNPQQAKTFMKSIEEDEKNKAEDLDIIKKEDIDEPKQEDTTDGNGGGG). Residues 27-49 (EKNKAEDLDIIKKEDIDEPKQED) show a composition bias toward basic and acidic residues. A run of 2 repeats spans residues 65–141 (LQNI…ARII) and 155–232 (IQNI…YPVL).

It belongs to the TBP family. As to quaternary structure, belongs to the TFIID complex together with the TBP-associated factors (TAFs). Binds DNA as monomer.

It is found in the nucleus. In terms of biological role, general transcription factor that functions at the core of the DNA-binding multiprotein factor TFIID. Binding of TFIID to the TATA box is the initial transcriptional step of the pre-initiation complex (PIC), playing a role in the activation of eukaryotic genes transcribed by RNA polymerase II. In Candida albicans (strain SC5314 / ATCC MYA-2876) (Yeast), this protein is TATA-box-binding protein (TBP1).